The sequence spans 518 residues: Organic cation/carnitine transporter 3 (518 aa).

The disordered stretch occupies residues M1–R23. The Cytoplasmic segment spans residues M1–C32. Residues I33–F53 traverse the membrane as a helical segment. Over D54–G122 the chain is Extracellular. N83 and N94 each carry an N-linked (GlcNAc...) asparagine glycan. A helical membrane pass occupies residues F123–A143. Over D144–C157 the chain is Cytoplasmic. The helical transmembrane segment at L158–F178 threads the bilayer. At L179–R180 the chain is on the extracellular side. Residues F181–L197 traverse the membrane as a helical segment. S198–K205 is an ATP binding site. At S198–V210 the chain is on the cytoplasmic side. The helical transmembrane segment at G211–I231 threads the bilayer. Over N232–N239 the chain is Extracellular. The helical transmembrane segment at L240–V259 threads the bilayer. Topologically, residues R260 to R325 are cytoplasmic. The chain crosses the membrane as a helical span at residues L326–A346. At L347–Y355 the chain is on the extracellular side. Residues L356–I376 form a helical membrane-spanning segment. Residues D377–D383 are Cytoplasmic-facing. A helical membrane pass occupies residues A384 to Q404. The Extracellular portion of the chain corresponds to Q405–Q410. Residues I411 to Y431 traverse the membrane as a helical segment. Residues T432–S443 are Cytoplasmic-facing. The chain crosses the membrane as a helical span at residues A444 to A464. The Extracellular segment spans residues A465 to Q470. A helical membrane pass occupies residues F471–L491. The Cytoplasmic portion of the chain corresponds to P492 to G518.

The protein belongs to the major facilitator (TC 2.A.1) superfamily. Organic cation transporter (TC 2.A.1.19) family. As to expression, mostly expressed in siliques, mainly in young seeds. Present in stems (cortical cells and parenchyma cells), at the basis of secondary inflorescences, and at the base of trichomes.

Its subcellular location is the vacuole membrane. High affinity carnitine transporter involved in the active cellular uptake of carnitine. Also transports organic cations. This chain is Organic cation/carnitine transporter 3 (OCT3), found in Arabidopsis thaliana (Mouse-ear cress).